The following is a 699-amino-acid chain: LMBR1 domain-containing protein 2 homolog (699 aa).

Topologically, residues 1-3 are extracellular; it reads MAY. A helical membrane pass occupies residues 4-26; it reads LLTFGIIAALCLASISLYRYGNI. The Cytoplasmic segment spans residues 27 to 30; it reads PRQH. Residues 31-51 form a helical membrane-spanning segment; it reads ILVTLSVLTAWCFSFLIVFTI. At 52-106 the chain is on the extracellular side; it reads PLDVTSTLYRQCLAEHKLALDAAGNASTTANITPPPECQEPWGMVPESVFPNLWR. N76 is a glycosylation site (N-linked (GlcNAc...) asparagine). The helical transmembrane segment at 107–127 threads the bilayer; the sequence is IIYWSSQFLTWLIMPLMQSYL. Over 128-144 the chain is Cytoplasmic; that stretch reads KAGDFTIKGKLKSALIE. Residues 145–165 form a helical membrane-spanning segment; that stretch reads NAIYYGSYLFICGVLLIYIAV. Residues 166 to 181 lie on the Extracellular side of the membrane; it reads KGVPLDWQKLKAIASS. The chain crosses the membrane as a helical span at residues 182 to 202; it reads ASNTWGLFLLILLLGYALVEV. Over 203–381 the chain is Cytoplasmic; it reads PRSLWNNAKP…ECLLKAPFLK (179 aa). A helical membrane pass occupies residues 382–402; it reads TLCVVTATMSAMVVWSEVTFF. Topologically, residues 403-426 are extracellular; it reads SRDPVLSIFANVIYLAKESYDFFT. The chain crosses the membrane as a helical span at residues 427-447; it reads IEVFSMMVLCYFFYCTYSTIL. Topologically, residues 448-467 are cytoplasmic; the sequence is RIRFLNLYYLAPHHQTNEHS. Residues 468–488 form a helical membrane-spanning segment; that stretch reads LIFSGMLLCRLTPPMCLNFLG. Residues 489–514 lie on the Extracellular side of the membrane; that stretch reads LIHMDSHIIPERMMETYYTRIMGHMD. A helical transmembrane segment spans residues 515–535; that stretch reads VIGIISNGFNIYFPMCMLAFC. Residues 536 to 699 lie on the Cytoplasmic side of the membrane; it reads LSTWFSLGSR…PPPRGLFDDV (164 aa). Residues 564–592 adopt a coiled-coil conformation; it reads ELVQEGKDLIAREKRRRQRAEEAMARRRD. Positions 669–699 are disordered; the sequence is FRGTSELDPDYEAENERRIVGPPPRGLFDDV.

Belongs to the LIMR family.

Its subcellular location is the membrane. The chain is LMBR1 domain-containing protein 2 homolog from Drosophila pseudoobscura pseudoobscura (Fruit fly).